We begin with the raw amino-acid sequence, 192 residues long: Phosphoheptose isomerase (192 aa).

The 158-residue stretch at 35-192 (LIETLENQGK…CIERHFAHKN (158 aa)) folds into the SIS domain. 50-52 (NGG) contributes to the substrate binding site. His-59 and Glu-63 together coordinate Zn(2+). Substrate is bound by residues Glu-63, 92-93 (ND), 118-120 (STS), Ser-123, and Gln-170. Zn(2+) is bound by residues Gln-170 and His-178.

Belongs to the SIS family. GmhA subfamily. As to quaternary structure, homotetramer. The cofactor is Zn(2+).

It is found in the cytoplasm. The catalysed reaction is 2 D-sedoheptulose 7-phosphate = D-glycero-alpha-D-manno-heptose 7-phosphate + D-glycero-beta-D-manno-heptose 7-phosphate. It functions in the pathway carbohydrate biosynthesis; D-glycero-D-manno-heptose 7-phosphate biosynthesis; D-glycero-alpha-D-manno-heptose 7-phosphate and D-glycero-beta-D-manno-heptose 7-phosphate from sedoheptulose 7-phosphate: step 1/1. The protein operates within bacterial outer membrane biogenesis; LPS core biosynthesis. In terms of biological role, catalyzes the isomerization of sedoheptulose 7-phosphate in D-glycero-D-manno-heptose 7-phosphate. This Helicobacter pylori (strain ATCC 700392 / 26695) (Campylobacter pylori) protein is Phosphoheptose isomerase.